The chain runs to 29 residues: Cytochrome b6-f complex subunit 8 (29 aa).

A helical membrane pass occupies residues 3–23 (IVDIAWAALMVVFTFSLSLVV).

Belongs to the PetN family. As to quaternary structure, the 4 large subunits of the cytochrome b6-f complex are cytochrome b6, subunit IV (17 kDa polypeptide, PetD), cytochrome f and the Rieske protein, while the 4 small subunits are PetG, PetL, PetM and PetN. The complex functions as a dimer.

The protein localises to the plastid. The protein resides in the chloroplast thylakoid membrane. Its function is as follows. Component of the cytochrome b6-f complex, which mediates electron transfer between photosystem II (PSII) and photosystem I (PSI), cyclic electron flow around PSI, and state transitions. This chain is Cytochrome b6-f complex subunit 8, found in Gnetum parvifolium (Small-leaved jointfir).